We begin with the raw amino-acid sequence, 671 residues long: MSEFQLVTRFQPAGDQPEAIRQLVEGIEAGLSHQTLLGVTGSGKTFSIANVIQQVQRPTLVLAPNKTLAAQLYGEFKAFFPNNAVEYFVSYYDYYQPEAYVPSSDTFIEKDASINDHIEQMRLSATKALLERRDAIIVTTVSCIYGLGSPETYLKMVLHVDRGDKLDQRALLRRLADLQYTRNEMDFARATFRVRGDVIDIFPAESDLEAIRIELFDDEVENIAAFDPLTGEVFRKLPRFTFYPKSHYVTPRETLLEAVEGIKEELKERLEYLHKANKLVEAQRLEQRTRFDLEMILELGYCNGIENYSRYLSGRPAGAPPPTLYDYLPPDALLVIDESHVSVPQVGAMYKGDRSRKETLVEYGFRMPSALDNRPMRFDEWEDVSPQTIFVSATPGPYEAEHAGRVVEQVVRPTGLVDPQVEVRPALTQVDDLLSEIRKRVAAGERVLATTLTKRMAEDLSDYLADHDVRVRYLHSDIDTVERVEIIRDLRLGTFDVLVGINLLREGLDMPEVSLVAILDADKEGFLRSERSLIQTIGRAARNLNGRAILYADNVTGSMQRAIDETERRREKQIAFNEANGIVPKGVVKDITDIMEGATVPGARSKKRKGMAKAAEESARYEAELRTPGEITKRIKQLEEKMMQFARDLEFEAAAQLRDEIAQLRERLISS.

In terms of domain architecture, Helicase ATP-binding spans 25–412 (EGIEAGLSHQ…AGRVVEQVVR (388 aa)). 38–45 (GVTGSGKT) contacts ATP. The Beta-hairpin signature appears at 91–114 (YYDYYQPEAYVPSSDTFIEKDASI). Residues 429–582 (QVDDLLSEIR…QIAFNEANGI (154 aa)) form the Helicase C-terminal domain. In terms of domain architecture, UVR spans 632-667 (TKRIKQLEEKMMQFARDLEFEAAAQLRDEIAQLRER).

It belongs to the UvrB family. In terms of assembly, forms a heterotetramer with UvrA during the search for lesions. Interacts with UvrC in an incision complex.

Its subcellular location is the cytoplasm. Functionally, the UvrABC repair system catalyzes the recognition and processing of DNA lesions. A damage recognition complex composed of 2 UvrA and 2 UvrB subunits scans DNA for abnormalities. Upon binding of the UvrA(2)B(2) complex to a putative damaged site, the DNA wraps around one UvrB monomer. DNA wrap is dependent on ATP binding by UvrB and probably causes local melting of the DNA helix, facilitating insertion of UvrB beta-hairpin between the DNA strands. Then UvrB probes one DNA strand for the presence of a lesion. If a lesion is found the UvrA subunits dissociate and the UvrB-DNA preincision complex is formed. This complex is subsequently bound by UvrC and the second UvrB is released. If no lesion is found, the DNA wraps around the other UvrB subunit that will check the other stand for damage. The polypeptide is UvrABC system protein B (Pseudomonas putida (strain ATCC 47054 / DSM 6125 / CFBP 8728 / NCIMB 11950 / KT2440)).